We begin with the raw amino-acid sequence, 1280 residues long: Clustered mitochondria protein homolog (1280 aa).

Residues 1-27 (MAASSNDASKSAMANSNVTTEVAQTPS) are compositionally biased toward polar residues. Disordered regions lie at residues 1–49 (MAAS…GQLP) and 169–189 (GLDQ…LADY). Acidic residues predominate over residues 32–43 (VNGEVEATEEDG). The region spanning 338–582 (DLARTQESYL…RLTPLDVAWI (245 aa)) is the Clu domain. 3 disordered regions span residues 633–669 (KANK…EPEQ), 905–943 (GAAV…AVSL), and 1214–1280 (TGRN…TQKP). The span at 635 to 648 (NKARGGRRRLPKAQ) shows a compositional bias: basic residues. Positions 649–669 (KKADAGKEVDGEKKAEAEPEQ) are enriched in basic and acidic residues. The segment covering 1221-1235 (PAAATPSVSDAAAAA) has biased composition (low complexity). The segment covering 1245-1261 (VDQRKIEDLLKYIEGES) has biased composition (basic and acidic residues). The span at 1265–1280 (PTKKRTQNPRKRTQKP) shows a compositional bias: basic residues.

This sequence belongs to the CLU family. May associate with the eukaryotic translation initiation factor 3 (eIF-3) complex.

The protein resides in the cytoplasm. In terms of biological role, mRNA-binding protein involved in proper cytoplasmic distribution of mitochondria. The sequence is that of Clustered mitochondria protein homolog from Phaeosphaeria nodorum (strain SN15 / ATCC MYA-4574 / FGSC 10173) (Glume blotch fungus).